Here is a 627-residue protein sequence, read N- to C-terminus: MSDSPIGSSQQVEPEHRTPDLMDIDPLIANLKALHEETRSDDDDDGQPSTSAKRKDSRADGIVIHQKKYSDPGRFLWIWLLGVRVPALSIDGEPHLPIEILDDMLTKKDKKDQMSFQNLLRYKNVYIRMASPSQFRAVMEKSKECENLNITSLSLMSRSDIERIMGELRLESMLTLAEHDNWDISDRVHVVHVNFIDYCSEWLESDDLEEDVMQSGTHGYWYKNRRNMRCIECQHCEGKFTPTDFIMHHHYPIKPSGFVHTGCNSFQWIRLIEVFDKSNENLEAWNKFVLNSHRAGKREYDEAAPHQAPPKRPAMETPVPVAADNGWEADEEEEGEEIVDRDADIEKCKLRNKKKMENLHIADFLGPSGSKGLKPRNKFEAVIIEQLNKMDDAALEALFLKSPEEYNLWVKESDFTHKVVTQQQEWKAKMKDPNFKSRASANFDVSKGEFDNMRHFDNASKATRQEIQQLAEQFANLDRDAKLLTPMEFVLREHALLKNVSADAIRVLCNRPPLPPLPPPPPPPKPKPAPVQPISLGNINFVALAQQLIASGIKLPLPIVTPPVVSTPAPVITPIPAALPISPNSDFLKQQLSTAMSSPALLSLYPKLTAGAYEQLAQFIKTTTVKN.

Positions 1 to 12 (MSDSPIGSSQQV) are enriched in polar residues. 3 disordered regions span residues 1-22 (MSDS…PDLM), 34-58 (LHEE…KDSR), and 299-318 (EYDE…METP).

It belongs to the SKI family. May interact with daf-3. As to expression, expressed in ganglia in the head and tail and in the anterior pharynx.

It localises to the nucleus. In terms of biological role, probable component of transcriptional regulatory complex with SMAD protein daf-3. Required to regulate entry into a developmentally arrested larval state known as dauer, in response to harsh environmental conditions. Involved in larvae undergoing cell-cycle arrest during the dauer stage. The chain is Ski protein homolog from Caenorhabditis elegans.